Consider the following 721-residue polypeptide: Penicillin-binding protein activator LpoA (721 aa).

Residues 1–26 (MVPLTFLRTKASRSLPIMLAALIFAG) form the signal peptide. Residue Cys27 is the site of N-palmitoyl cysteine attachment. Cys27 carries S-diacylglycerol cysteine lipidation. Residues 316–330 (TSDLTSAQAPAQGTM) show a composition bias toward polar residues. Residues 316–393 (TSDLTSAQAP…PAAQPQAVAA (78 aa)) form a disordered region. The segment covering 331–393 (QNPVTAPTTP…PAAQPQAVAA (63 aa)) has biased composition (low complexity).

It belongs to the LpoA family. In terms of assembly, interacts with PBP1a.

The protein resides in the cell outer membrane. Regulator of peptidoglycan synthesis that is essential for the function of penicillin-binding protein 1A (PBP1a). In Enterobacter sp. (strain 638), this protein is Penicillin-binding protein activator LpoA.